We begin with the raw amino-acid sequence, 222 residues long: Formimidoylglutamase (222 aa).

Mn(2+)-binding residues include H34, D59, H61, D63, D150, and D152.

Belongs to the arginase family. Mn(2+) serves as cofactor.

It catalyses the reaction N-formimidoyl-L-glutamate + H2O = formamide + L-glutamate. It participates in amino-acid degradation; L-histidine degradation into L-glutamate; L-glutamate from N-formimidoyl-L-glutamate (hydrolase route): step 1/1. Functionally, catalyzes the conversion of N-formimidoyl-L-glutamate to L-glutamate and formamide. The sequence is that of Formimidoylglutamase (hutG) from Klebsiella aerogenes (Enterobacter aerogenes).